The primary structure comprises 185 residues: Probable prefoldin subunit 3 (185 aa).

This sequence belongs to the prefoldin subunit alpha family. In terms of assembly, heterohexamer of two PFD-alpha type and four PFD-beta type subunits.

Binds specifically to cytosolic chaperonin (c-CPN) and transfers target proteins to it. Binds to nascent polypeptide chain and promotes folding in an environment in which there are many competing pathways for nonnative proteins. The sequence is that of Probable prefoldin subunit 3 (pfd-3) from Caenorhabditis elegans.